Consider the following 447-residue polypeptide: Gamma-glutamyl phosphate reductase (447 aa).

This sequence belongs to the gamma-glutamyl phosphate reductase family.

Its subcellular location is the cytoplasm. The enzyme catalyses L-glutamate 5-semialdehyde + phosphate + NADP(+) = L-glutamyl 5-phosphate + NADPH + H(+). It participates in amino-acid biosynthesis; L-proline biosynthesis; L-glutamate 5-semialdehyde from L-glutamate: step 2/2. Functionally, catalyzes the NADPH-dependent reduction of L-glutamate 5-phosphate into L-glutamate 5-semialdehyde and phosphate. The product spontaneously undergoes cyclization to form 1-pyrroline-5-carboxylate. The polypeptide is Gamma-glutamyl phosphate reductase (Methanosarcina acetivorans (strain ATCC 35395 / DSM 2834 / JCM 12185 / C2A)).